A 622-amino-acid polypeptide reads, in one-letter code: 1,4-alpha-glucan branching enzyme GlgB (622 aa).

Catalysis depends on D300, which acts as the Nucleophile. The active-site Proton donor is E351.

It belongs to the glycosyl hydrolase 13 family. GlgB subfamily. Monomer.

It carries out the reaction Transfers a segment of a (1-&gt;4)-alpha-D-glucan chain to a primary hydroxy group in a similar glucan chain.. Its pathway is glycan biosynthesis; glycogen biosynthesis. Catalyzes the formation of the alpha-1,6-glucosidic linkages in glycogen by scission of a 1,4-alpha-linked oligosaccharide from growing alpha-1,4-glucan chains and the subsequent attachment of the oligosaccharide to the alpha-1,6 position. In Streptococcus agalactiae serotype V (strain ATCC BAA-611 / 2603 V/R), this protein is 1,4-alpha-glucan branching enzyme GlgB.